Here is a 101-residue protein sequence, read N- to C-terminus: uncharacterized protein (101 aa).

Residues 39 to 74 (CDERHGRPLPHSQESQHGSATSKKAVRGTADTAPLE) are disordered. Residues 50–60 (SQESQHGSATS) show a composition bias toward polar residues.

This is an uncharacterized protein from Homo sapiens (Human).